Consider the following 238-residue polypeptide: Type III pantothenate kinase (238 aa).

Residue 7–14 coordinates ATP; that stretch reads DAGNSGLK. Residues Tyr-88 and 95–98 contribute to the substrate site; that span reads GVDR. Asp-97 (proton acceptor) is an active-site residue. Asp-117 contacts K(+). Thr-120 is an ATP binding site. Residue Thr-172 coordinates substrate.

It belongs to the type III pantothenate kinase family. Homodimer. NH4(+) serves as cofactor. The cofactor is K(+).

Its subcellular location is the cytoplasm. The catalysed reaction is (R)-pantothenate + ATP = (R)-4'-phosphopantothenate + ADP + H(+). Its pathway is cofactor biosynthesis; coenzyme A biosynthesis; CoA from (R)-pantothenate: step 1/5. In terms of biological role, catalyzes the phosphorylation of pantothenate (Pan), the first step in CoA biosynthesis. This chain is Type III pantothenate kinase, found in Hahella chejuensis (strain KCTC 2396).